A 346-amino-acid chain; its full sequence is Nucleoplasmin-like protein ANO39 (346 aa).

The residue at position 2 (S2) is an N-acetylserine. A glycan (N-linked (GlcNAc...) asparagine) is linked at N85. Acidic residues predominate over residues 123–141 (DEEELEEDDEEEEEEDEVE). The tract at residues 123–285 (DEEELEEDDE…KAKAKTDTKL (163 aa)) is disordered. Position 145 is a phosphoserine; by CDC2 (S145). A compositionally biased stretch (basic and acidic residues) spans 171–180 (AKLDKDADKK). A compositionally biased stretch (acidic residues) spans 181–247 (EDDDEEEDDE…EEEEDEDEES (67 aa)). The N-linked (GlcNAc...) asparagine glycan is linked to N264. Residues 271-285 (GDNKPKAKAKTDTKL) are compositionally biased toward basic and acidic residues.

Belongs to the nucleoplasmin family. Phosphorylation occurs in oocytes during the progression of the first meiotic M phase. No phosphorylation is observed in immature oocytes. In terms of tissue distribution, expressed specifically in the oocytes of the ovaries.

It is found in the nucleus. Its subcellular location is the nucleolus. The protein localises to the cytoplasm. Binds double-stranded RNA and both single-stranded and double-stranded DNA. The polypeptide is Nucleoplasmin-like protein ANO39 (Patiria pectinifera (Starfish)).